The chain runs to 342 residues: Protein-glutamate methylesterase/protein-glutamine glutaminase 4 (342 aa).

The Response regulatory domain occupies 2–119; the sequence is NIGIVNDLPL…GGSADPSQPL (118 aa). 4-aspartylphosphate is present on D53. The CheB-type methylesterase domain occupies 144–337; the sequence is PAPQGALPPL…DQLISLVQRN (194 aa). Catalysis depends on residues S159, H186, and D279.

This sequence belongs to the CheB family. Phosphorylated by CheA. Phosphorylation of the N-terminal regulatory domain activates the methylesterase activity.

The protein localises to the cytoplasm. It carries out the reaction [protein]-L-glutamate 5-O-methyl ester + H2O = L-glutamyl-[protein] + methanol + H(+). The enzyme catalyses L-glutaminyl-[protein] + H2O = L-glutamyl-[protein] + NH4(+). Functionally, involved in chemotaxis. Part of a chemotaxis signal transduction system that modulates chemotaxis in response to various stimuli. Catalyzes the demethylation of specific methylglutamate residues introduced into the chemoreceptors (methyl-accepting chemotaxis proteins or MCP) by CheR. Also mediates the irreversible deamidation of specific glutamine residues to glutamic acid. This is Protein-glutamate methylesterase/protein-glutamine glutaminase 4 from Burkholderia thailandensis (strain ATCC 700388 / DSM 13276 / CCUG 48851 / CIP 106301 / E264).